The following is a 310-amino-acid chain: Probable cell division protein WhiA (310 aa).

Residues S277–R310 constitute a DNA-binding region (H-T-H motif).

Belongs to the WhiA family.

Its function is as follows. Involved in cell division and chromosome segregation. This is Probable cell division protein WhiA from Lactobacillus delbrueckii subsp. bulgaricus (strain ATCC BAA-365 / Lb-18).